We begin with the raw amino-acid sequence, 333 residues long: FAD-dependent monooxygenase pytG (333 aa).

A helical transmembrane segment spans residues 6 to 26; that stretch reads LPNVSVAIIGAGIGGLTLGAF. FAD-binding residues include Glu38 and Arg109. A glycan (N-linked (GlcNAc...) asparagine) is linked at Asn303.

The protein belongs to the paxM FAD-dependent monooxygenase family. Requires FAD as cofactor.

Its subcellular location is the membrane. It participates in secondary metabolite biosynthesis. Its function is as follows. FAD-dependent monooxygenase; part of the gene cluster that mediates the biosynthesis of pyranterreones, a family of antioxidative compounds. The first step of pyranonigrins biosynthesis is performed by the hybrid PKS-NRPS synthetase pytA that condenses 4 malonyl-CoA units ato the acetyl starter unit by the modular PKS of pytA. The acyl chain is then connected to an L-serine through the amide bond by the modular NRPS of pytA. A tetramic acid is formed and released from the PKS-NRPS pytA to give pyranterreone 5 with the help of the thioesterase pytI. Pyranterreone 5 could be methylated by pytC to afford pyranterreone 6. Both pyranterreones 5 and 6 are subsequently oxidized by the FAD-linked oxidoreductase pytB and the cytochrome P450 monooxygenase pytD to form the fused gamma-pyrone core, resulting in pyranterreones 7 and 11, respectively. The hydroxy group at C-8 of pyranterreones 7 and 11 are dehydrated by the aspartyl protease pytH to form a delta-7 double bond to give pyranterreones 3 and 1, 2 accordingly. The exo-methylene of pyranterreone 3 could be reduced into a pendant methyl by reductase pytE to provide pyranterreone 4, also known as cordylactam. Pyranterreone 4 can be reconverted to pyranterreone 3 through pytB-catalyzed dehydrogenation or further oxidized to pyranterreones 9 and 10. The protein is FAD-dependent monooxygenase pytG of Aspergillus terreus (strain NIH 2624 / FGSC A1156).